The chain runs to 218 residues: MYQILIGCVWQKSPYINQCTEFQPPLSFVTPERMRRFMRCWARLELVYMLAWIVTTKLVKATRLDFTWGPGEPKRILEASCGSGPIMKGQLFTSPNIKNLLNRTTGIMVKAHCNPPEAILWVDTPPKPVWVNPFAVVQGLAEDVTNGNMPQDFKEKLLFALDDSLSQSQSSPDEILGPPPLGCFTGPFFLSPPKSKDIAEGLKDSCIPASYYANLQKT.

The tract at residues 57–185 (KLVKATRLDF…LGPPPLGCFT (129 aa)) is interaction with gH. The region spanning 60–218 (KATRLDFTWG…ASYYANLQKT (159 aa)) is the gL alphaherpesvirus-type domain. Disulfide bonds link Cys81–Cys113 and Cys183–Cys206.

It belongs to the herpesviridae glycoprotein L (gL) family. Alphaherpesvirinae gL subfamily. In terms of assembly, interacts with glycoprotein H (gH); this interaction is necessary for the correct processing and cell surface expression of gH. The heterodimer gH/gL seems to interact with gB trimers during fusion.

Its subcellular location is the virion membrane. The protein resides in the host cell membrane. It localises to the host Golgi apparatus. It is found in the host trans-Golgi network. Its function is as follows. The heterodimer glycoprotein H-glycoprotein L is required for the fusion of viral and plasma membranes leading to virus entry into the host cell. Acts as a functional inhibitor of gH and maintains gH in an inhibited form. Upon binding to host integrins, gL dissociates from gH leading to activation of the viral fusion glycoproteins gB and gH. The polypeptide is Envelope glycoprotein L (Equus caballus (Horse)).